The chain runs to 214 residues: Ribonuclease T (214 aa).

An Exonuclease domain is found at 20–195 (VVVDVETAGF…YDTQKTAELF (176 aa)). Residues aspartate 23, glutamate 25, histidine 182, and aspartate 187 each coordinate Mg(2+). The active-site Proton donor/acceptor is the histidine 182.

It belongs to the RNase T family. In terms of assembly, homodimer. Requires Mg(2+) as cofactor.

In terms of biological role, trims short 3' overhangs of a variety of RNA species, leaving a one or two nucleotide 3' overhang. Responsible for the end-turnover of tRNA: specifically removes the terminal AMP residue from uncharged tRNA (tRNA-C-C-A). Also appears to be involved in tRNA biosynthesis. This chain is Ribonuclease T, found in Vibrio parahaemolyticus serotype O3:K6 (strain RIMD 2210633).